The chain runs to 277 residues: Intercellular adhesion molecule 2 (277 aa).

A signal peptide spans 1-22; the sequence is MSSFACWSLSLLILFYSPGSGE. Topologically, residues 23–222 are extracellular; that stretch reads KAFEVYIWSE…EVYEPMQDNQ (200 aa). Ig-like C2-type domains follow at residues 39 to 98 and 127 to 196; these read TESW…CSGK and GEDF…LDLR. N-linked (GlcNAc...) asparagine glycans are attached at residues N45, N82, N158, N176, and N186. 3 disulfides stabilise this stretch: C46/C91, C50/C95, and C134/C189. A helical membrane pass occupies residues 223-247; sequence MVIIIVVVSILLFLFVTSVLLCFIF. Topologically, residues 248–277 are cytoplasmic; sequence GQHWHRRRTGTYGVLAAWRRLPRAFRARPV. Residues 250–277 are required for interaction with EZR, MSN and RDX and co-localization to microvilli; it reads HWHRRRTGTYGVLAAWRRLPRAFRARPV.

Belongs to the immunoglobulin superfamily. ICAM family. In terms of assembly, interacts with RDX, EZR and MSN. As to expression, expressed in endothelial cells and leukocytes. High levels found in lung.

It localises to the membrane. Its subcellular location is the cell projection. The protein localises to the microvillus. Functionally, ICAM proteins are ligands for the leukocyte adhesion protein LFA-1 (integrin alpha-L/beta-2). ICAM2 may play a role in lymphocyte recirculation by blocking LFA-1-dependent cell adhesion. It mediates adhesive interactions important for antigen-specific immune response, NK-cell mediated clearance, lymphocyte recirculation, and other cellular interactions important for immune response and surveillance. The polypeptide is Intercellular adhesion molecule 2 (Icam2) (Mus musculus (Mouse)).